Consider the following 135-residue polypeptide: MMLSPDQAADSDHPSSAHSDPESLGGTDTKVLGSVSDLEPVEEAEGDGKGGSRAALYPHPQQLSREEKRRRRRATAKYRSAHATRERIRVEAFNLAFAELRKLLPTLPPDKKLSKIEILRLAICYISYLNHVLDV.

The segment at methionine 1 to serine 80 is disordered. The segment covering aspartate 10–proline 21 has biased composition (basic and acidic residues). The span at lysine 68–serine 80 shows a compositional bias: basic residues. A bHLH domain is found at lysine 77 to leucine 129.

In terms of assembly, homodimer. Interacts and may form heterodimers with STAT3.

Its subcellular location is the nucleus. Functionally, transcription factor which binds the E box motif 5'-CA[TC][AG]TG-3'. Involved in regulating energy expenditure, body mass, voluntary physical activity, mating behavior and reproductive longevity, acting through the hypothalamic-pituitary-gonadal axis. Acts as a transcriptional activator of target genes, including NDN, PCSK1, MC4R. Is also a transcriptional activator of KISS1. May act centrally to regulate function of both white and brown adipose tissue. Together with NHLH1, required to maintain migration and survival of cells in the anterior extramural migration stream (aes), which forms the precerebellar nuclei. Also, in concert with NHLH1, may determine fate of gonadotropin releasing hormone-1 (GnRH-1) neurons. The chain is Helix-loop-helix protein 2 (NHLH2) from Homo sapiens (Human).